Reading from the N-terminus, the 141-residue chain is Large ribosomal subunit protein uL11 (141 aa).

The protein belongs to the universal ribosomal protein uL11 family. As to quaternary structure, part of the ribosomal stalk of the 50S ribosomal subunit. Interacts with L10 and the large rRNA to form the base of the stalk. L10 forms an elongated spine to which L12 dimers bind in a sequential fashion forming a multimeric L10(L12)X complex. Post-translationally, one or more lysine residues are methylated.

Forms part of the ribosomal stalk which helps the ribosome interact with GTP-bound translation factors. In Synechococcus sp. (strain ATCC 27144 / PCC 6301 / SAUG 1402/1) (Anacystis nidulans), this protein is Large ribosomal subunit protein uL11.